The sequence spans 219 residues: Ras-related protein Rab-3B (219 aa).

Ala2 bears the N-acetylalanine mark. GTP is bound by residues Ser31, Ser32, Val33, Gly34, Lys35, Thr36, Ser37, Pro49, and Ser53. Thr36 provides a ligand contact to Mg(2+). A Switch 1 motif is present at residues 45-58 (DTFTPAFVSTVGID). The Mg(2+) site is built by Thr54 and Asp77. Residues 78-96 (TAGQERYRTITTAYYRGAM) carry the Switch 2 motif. Gly80 provides a ligand contact to GTP. Thr86 is modified (phosphothreonine). Asn135, Lys136, Asp138, Ala166, and Lys167 together coordinate GTP. Residues Ser188 and Ser190 each carry the phosphoserine modification. 2 S-geranylgeranyl cysteine lipidation sites follow: Cys217 and Cys219. Position 219 is a cysteine methyl ester (Cys219).

Belongs to the small GTPase superfamily. Rab family. Interacts with RIMS1, RIMS2, RPH3A and RPH3AL. The GTP-bound form interacts with GAS8/DRC4 (via coiled-coil domains). Interacts with GDI2, CHM and CHML; phosphorylation at Thr-86 disrupts these interactions. Interacts with MADD (via uDENN domain); the GTP-bound form is preferred for interaction. The cofactor is Mg(2+). Phosphorylation of Thr-86 in the switch II region by LRRK2 prevents the association of RAB regulatory proteins, including CHM, CHML and RAB GDP dissociation inhibitor GDI2.

Its subcellular location is the cell membrane. It is found in the golgi apparatus. It carries out the reaction GTP + H2O = GDP + phosphate + H(+). Regulated by guanine nucleotide exchange factors (GEFs) which promote the exchange of bound GDP for free GTP. Regulated by GTPase activating proteins (GAPs) which increase the GTP hydrolysis activity. Inhibited by GDP dissociation inhibitors (GDIs) which prevent Rab-GDP dissociation. In terms of biological role, the small GTPases Rab are key regulators of intracellular membrane trafficking, from the formation of transport vesicles to their fusion with membranes. Rabs cycle between an inactive GDP-bound form and an active GTP-bound form that is able to recruit to membranes different sets of downstream effectors directly responsible for vesicle formation, movement, tethering and fusion. This is Ras-related protein Rab-3B (RAB3B) from Mesocricetus auratus (Golden hamster).